Here is a 362-residue protein sequence, read N- to C-terminus: Very-long-chain (3R)-3-hydroxyacyl-CoA dehydratase 3 (362 aa).

Residue Met1 is modified to N-acetylmethionine. Over 1-149 (METQVLTPHV…ETLTNLKKGY (149 aa)) the chain is Cytoplasmic. In terms of domain architecture, CS spans 5-94 (VLTPHVYWAQ…KGSHWWERLT (90 aa)). The residue at position 7 (Thr7) is a Phosphothreonine. Positions 111–138 (LDESDAEMELRAKEEERLNKLRLEREGS) form a coiled coil. A Phosphoserine modification is found at Ser114. Residues 150 to 170 (LFMYNLVQLLGFSWIFVNLTV) traverse the membrane as a helical segment. Topologically, residues 171-189 (RFFILGKESFYDTFHNVAD) are lumenal. Residues 190-210 (MMYFCQMLALVETLNAAIGVT) traverse the membrane as a helical segment. The Cytoplasmic segment spans residues 211-212 (ST). Residues 213–233 (PVLPALIQFLGRNFILFLVFG) form a helical membrane-spanning segment. At 234–242 (TMEEMQNKA) the chain is on the lumenal side. A helical membrane pass occupies residues 243-263 (VVFFVFYSWSAIEIFRYPFYM). The Cytoplasmic portion of the chain corresponds to 264-280 (LSCIDMDWKVLTWLRYT). Residues 281–301 (MWIPLYPLGCLSEAVAVIQSI) traverse the membrane as a helical segment. Active-site residues include Tyr286 and Glu293. The Lumenal segment spans residues 302–322 (PVFNESGRFSFTLPYPVKMKV). The chain crosses the membrane as a helical span at residues 323-343 (RFSFFLQVYLVMLFLGLYINF). The Cytoplasmic portion of the chain corresponds to 344–362 (RHLYKQRRRRYGQKKKKLH).

It belongs to the very long-chain fatty acids dehydratase HACD family. In terms of assembly, may interact with enzymes of the ELO family (including ELOVL1); with those enzymes that mediate condensation, the first of the four steps of the reaction cycle responsible for fatty acids elongation, may be part of a larger fatty acids elongase complex. Interacts with RAC1. Associates with internalized insulin receptor/INSR complexes on Golgi/endosomal membranes; HACD3/PTPLAD1 together with ATIC and PRKAA2/AMPK2 is proposed to be part of a signaling network regulating INSR autophosphorylation and endocytosis.

The protein localises to the endoplasmic reticulum membrane. The enzyme catalyses a very-long-chain (3R)-3-hydroxyacyl-CoA = a very-long-chain (2E)-enoyl-CoA + H2O. The catalysed reaction is (3R)-hydroxyhexadecanoyl-CoA = (2E)-hexadecenoyl-CoA + H2O. Its pathway is lipid metabolism; fatty acid biosynthesis. Its function is as follows. Catalyzes the third of the four reactions of the long-chain fatty acids elongation cycle. This endoplasmic reticulum-bound enzymatic process, allows the addition of two carbons to the chain of long- and very long-chain fatty acids/VLCFAs per cycle. This enzyme catalyzes the dehydration of the 3-hydroxyacyl-CoA intermediate into trans-2,3-enoyl-CoA, within each cycle of fatty acid elongation. Thereby, it participates in the production of VLCFAs of different chain lengths that are involved in multiple biological processes as precursors of membrane lipids and lipid mediators. Involved in Rac1-signaling pathways leading to the modulation of gene expression. Promotes insulin receptor/INSR autophosphorylation and is involved in INSR internalization. This Mus musculus (Mouse) protein is Very-long-chain (3R)-3-hydroxyacyl-CoA dehydratase 3.